A 100-amino-acid chain; its full sequence is Urease subunit gamma (100 aa).

The protein belongs to the urease gamma subunit family. Heterotrimer of UreA (gamma), UreB (beta) and UreC (alpha) subunits. Three heterotrimers associate to form the active enzyme.

Its subcellular location is the cytoplasm. The catalysed reaction is urea + 2 H2O + H(+) = hydrogencarbonate + 2 NH4(+). It participates in nitrogen metabolism; urea degradation; CO(2) and NH(3) from urea (urease route): step 1/1. This Allorhizobium ampelinum (strain ATCC BAA-846 / DSM 112012 / S4) (Agrobacterium vitis (strain S4)) protein is Urease subunit gamma.